Here is a 510-residue protein sequence, read N- to C-terminus: Histidine ammonia-lyase (510 aa).

Positions 143 to 145 form a cross-link, 5-imidazolinone (Ala-Gly); that stretch reads ASG. Residue S144 is modified to 2,3-didehydroalanine (Ser).

Belongs to the PAL/histidase family. Contains an active site 4-methylidene-imidazol-5-one (MIO), which is formed autocatalytically by cyclization and dehydration of residues Ala-Ser-Gly.

It localises to the cytoplasm. The catalysed reaction is L-histidine = trans-urocanate + NH4(+). It participates in amino-acid degradation; L-histidine degradation into L-glutamate; N-formimidoyl-L-glutamate from L-histidine: step 1/3. The sequence is that of Histidine ammonia-lyase from Yersinia pseudotuberculosis serotype I (strain IP32953).